Consider the following 459-residue polypeptide: MALWGGRFSQKADQRFKQFNDSLRFDYRLAEQDITGSVAWSKALITVGVLTVEEQQRLELALNELLNEVQANPQAILQSDAEDIHSWVEGQLISKVGGLGKKLHTGRSRNDQVATDLKLWCKEYISHLHQAIVELQQVLVITAEKNQDTVMPGYTHLQRAQPITFAHWCLAYVEMLVRDENRLQDTLKRLNTSPLGCGALAGTAYDIDREQLASWLGFASATRNSLDSVSDRDHVLELLSNASISMIHLSRFAEDLIFFNSGEAGFIELSDRVTSGSSLMPQKKNPDALELIRGKCGRVQGALTGMMMTLKGLPLAYNKDMQEDKEGLFDALDIWLDCLHMAALVLDGIQVRRSRCAEAAKQGYANATELADYLVAKGVPFREAHHIVGEIVMMALTQGKALEALPLTELQKFSSAIIEDVYDILSLQSCLDKRLAKGGVSPKQVMKAIVEAKQRLKLS.

It belongs to the lyase 1 family. Argininosuccinate lyase subfamily.

The protein localises to the cytoplasm. It catalyses the reaction 2-(N(omega)-L-arginino)succinate = fumarate + L-arginine. Its pathway is amino-acid biosynthesis; L-arginine biosynthesis; L-arginine from L-ornithine and carbamoyl phosphate: step 3/3. This is Argininosuccinate lyase from Photorhabdus laumondii subsp. laumondii (strain DSM 15139 / CIP 105565 / TT01) (Photorhabdus luminescens subsp. laumondii).